Reading from the N-terminus, the 230-residue chain is 5'-methylthioadenosine/S-adenosylhomocysteine nucleosidase (230 aa).

Glu-12 serves as the catalytic Proton acceptor. Residues Gly-78, Ile-153, and Met-174–Glu-175 contribute to the substrate site. Residue Asp-198 is the Proton donor of the active site.

The protein belongs to the PNP/UDP phosphorylase family. MtnN subfamily.

The enzyme catalyses S-adenosyl-L-homocysteine + H2O = S-(5-deoxy-D-ribos-5-yl)-L-homocysteine + adenine. It carries out the reaction S-methyl-5'-thioadenosine + H2O = 5-(methylsulfanyl)-D-ribose + adenine. It catalyses the reaction 5'-deoxyadenosine + H2O = 5-deoxy-D-ribose + adenine. The protein operates within amino-acid biosynthesis; L-methionine biosynthesis via salvage pathway; S-methyl-5-thio-alpha-D-ribose 1-phosphate from S-methyl-5'-thioadenosine (hydrolase route): step 1/2. In terms of biological role, catalyzes the irreversible cleavage of the glycosidic bond in both 5'-methylthioadenosine (MTA) and S-adenosylhomocysteine (SAH/AdoHcy) to adenine and the corresponding thioribose, 5'-methylthioribose and S-ribosylhomocysteine, respectively. Also cleaves 5'-deoxyadenosine, a toxic by-product of radical S-adenosylmethionine (SAM) enzymes, into 5-deoxyribose and adenine. This Shewanella piezotolerans (strain WP3 / JCM 13877) protein is 5'-methylthioadenosine/S-adenosylhomocysteine nucleosidase.